A 748-amino-acid chain; its full sequence is Cytosolic phospholipase A2 (748 aa).

Residues Met-1 to Ser-178 form a phospholipid binding region. Ser-2 carries the phosphoserine modification. A C2 domain is found at Pro-6–Phe-122. Residues Asp-40, Thr-41, Asp-43, Asn-65, Asp-93, Ala-94, and Asn-95 each contribute to the Ca(2+) site. A PLA2c domain is found at Ser-140 to Asn-739. Catalysis depends on Ser-228, which acts as the Nucleophile. At Thr-268 the chain carries Phosphothreonine. Positions Lys-427 to Ser-458 are disordered. Phosphoserine occurs at positions 434, 435, and 437. Ser-505 carries the post-translational modification Phosphoserine; by MAPK. The residue at position 515 (Ser-515) is a Phosphoserine. Residue Lys-540 forms a Glycyl lysine isopeptide (Lys-Gly) (interchain with G-Cter in SUMO2) linkage. The active-site Proton acceptor is the Asp-548. A Glycyl lysine isopeptide (Lys-Gly) (interchain with G-Cter in SUMO2) cross-link involves residue Lys-605. A phosphoserine mark is found at Ser-726 and Ser-728.

Interacts with KAT5. Phosphorylated at both Ser-505 and Ser-726 in response to mitogenic stimuli. Expressed in various organs including uterus, kidney, spleen, liver, heart, lung and brain (at protein level).

The protein localises to the cytoplasm. The protein resides in the golgi apparatus membrane. Its subcellular location is the nucleus envelope. The enzyme catalyses a 1,2-diacyl-sn-glycero-3-phosphocholine + H2O = a 1-acyl-sn-glycero-3-phosphocholine + a fatty acid + H(+). It catalyses the reaction a 1-O-alkyl-2-acyl-sn-glycero-3-phosphocholine + H2O = a 1-O-alkyl-sn-glycero-3-phosphocholine + a fatty acid + H(+). The catalysed reaction is a 1-acyl-sn-glycero-3-phosphocholine + H2O = sn-glycerol 3-phosphocholine + a fatty acid + H(+). It carries out the reaction 1-hexadecanoyl-2-(5Z,8Z,11Z,14Z-eicosatetraenoyl)-sn-glycero-3-phosphocholine + H2O = 1-hexadecanoyl-sn-glycero-3-phosphocholine + (5Z,8Z,11Z,14Z)-eicosatetraenoate + H(+). The enzyme catalyses 1,2-di-(5Z,8Z,11Z,14Z-eicosatetraenoyl)-sn-glycero-3-phosphocholine + H2O = 1-(5Z,8Z,11Z,14Z-eicosatetraenoyl)-sn-glycero-3-phosphocholine + (5Z,8Z,11Z,14Z)-eicosatetraenoate + H(+). It catalyses the reaction 1-octadecanoyl-2-(5Z,8Z,11Z,14Z-eicosatetraenoyl)-sn-glycero-3-phosphocholine + H2O = 1-octadecanoyl-sn-glycero-3-phosphocholine + (5Z,8Z,11Z,14Z)-eicosatetraenoate + H(+). The catalysed reaction is 1-hexadecanoyl-2-(9Z,12Z-octadecadienoyl)-sn-glycero-3-phosphocholine + H2O = (9Z,12Z)-octadecadienoate + 1-hexadecanoyl-sn-glycero-3-phosphocholine + H(+). It carries out the reaction 1-octadecanoyl-2-(9Z,12Z,15Z-octadecatrienoyl)-sn-glycero-3-phosphocholine + H2O = (9Z,12Z,15Z)-octadecatrienoate + 1-octadecanoyl-sn-glycero-3-phosphocholine + H(+). The enzyme catalyses 1-(5Z,8Z,11Z,14Z-eicosatetraenoyl)-2-hexadecanoyl-sn-glycero-3-phosphocholine + H2O = 1-(5Z,8Z,11Z,14Z-eicosatetraenoyl)-sn-glycero-3-phosphocholine + hexadecanoate + H(+). It catalyses the reaction 1-O-hexadecyl-2-(5Z,8Z,11Z,14Z)-eicosatetraenoyl-sn-glycero-3-phosphocholine + H2O = 1-O-hexadecyl-sn-glycero-3-phosphocholine + (5Z,8Z,11Z,14Z)-eicosatetraenoate + H(+). The catalysed reaction is 1,2-di-(9Z-octadecenoyl)-sn-glycero-3-phospho-(1'-sn-glycerol) + H2O = 1-(9Z-octadecenoyl)-sn-glycero-3-phospho-(1'-sn-glycerol) + (9Z)-octadecenoate + H(+). It carries out the reaction 1-octadecanoyl-2-(5Z,8Z,11Z,14Z-eicosatetraenoyl)-sn-glycero-3-phosphate + H2O = 1-octadecanoyl-sn-glycero-3-phosphate + (5Z,8Z,11Z,14Z)-eicosatetraenoate + H(+). The enzyme catalyses 1-hexadecanoyl-sn-glycero-3-phosphocholine + H2O = sn-glycerol 3-phosphocholine + hexadecanoate + H(+). It catalyses the reaction 2-(prostaglandin E2)-sn-glycero-3-phosphoethanolamine + H2O = sn-glycero-3-phosphoethanolamine + prostaglandin E2 + H(+). The catalysed reaction is 2-[(15S)-hydroxy-(5Z,8Z,11Z,13E)-eicosatetraenoyl]-sn-glycero-3-phosphocholine + H2O = (15S)-hydroxy-(5Z,8Z,11Z,13E)-eicosatetraenoate + sn-glycerol 3-phosphocholine + H(+). It carries out the reaction 2-[(15R)-hydroxy-(5Z,8Z,11Z,13E)-eicosatetraenoyl]-sn-glycero-3-phosphocholine + H2O = (15R)-hydroxy-(5Z,8Z,11Z,13E)-eicosatetraenoate + sn-glycerol 3-phosphocholine + H(+). The enzyme catalyses 2-(prostaglandin E2)-sn-glycero-3-phosphocholine + H2O = prostaglandin E2 + sn-glycerol 3-phosphocholine + H(+). It catalyses the reaction 2-[(11R)-hydroxy-(5Z,8Z,12E,14Z)-eicosatetraenoyl]-sn-glycero-3-phosphocholine + H2O = (11R)-hydroxy-(5Z,8Z,12E,14Z)-eicosatetraenoate + sn-glycerol 3-phosphocholine + H(+). The catalysed reaction is 1-(5Z,8Z,11Z,14Z-eicosatetraenoyl)-2-O-hexadecyl-sn-glycero-3-phosphocholine + H2O = 2-O-hexadecyl-sn-glycero-3-phosphocholine + (5Z,8Z,11Z,14Z)-eicosatetraenoate + H(+). It carries out the reaction 1-octadecanoyl-2-(5Z,8Z,11Z,14Z-eicosatetraenoyl)-sn-glycero-3-phosphocholine + glycerol = 1-(5Z,8Z,11Z,14Z-eicosatetraenoyl)-glycerol + 1-octadecanoyl-sn-glycero-3-phosphocholine. The enzyme catalyses 1-octadecanoyl-2-(9Z,12Z,15Z-octadecatrienoyl)-sn-glycero-3-phosphocholine + glycerol = 1-(9Z,12Z,15Z-octadecatrienoyl)-glycerol + 1-octadecanoyl-sn-glycero-3-phosphocholine. It participates in membrane lipid metabolism; glycerophospholipid metabolism. The protein operates within lipid metabolism; arachidonate metabolism. Its pathway is lipid metabolism; prostaglandin biosynthesis. It functions in the pathway lipid metabolism; leukotriene B4 biosynthesis. With respect to regulation, activated by cytosolic calcium, which is necessary for binding to membrane lipids. Activated by phosphorylation in response to mitogenic stimuli. Stimulated by agonists such as ATP and thrombin. Has primarily calcium-dependent phospholipase and lysophospholipase activities, with a major role in membrane lipid remodeling and biosynthesis of lipid mediators of the inflammatory response. Plays an important role in embryo implantation and parturition through its ability to trigger prostanoid production. Preferentially hydrolyzes the ester bond of the fatty acyl group attached at sn-2 position of phospholipids (phospholipase A2 activity). Selectively hydrolyzes sn-2 arachidonoyl group from membrane phospholipids, providing the precursor for eicosanoid biosynthesis via the cyclooxygenase pathway. In an alternative pathway of eicosanoid biosynthesis, hydrolyzes sn-2 fatty acyl chain of eicosanoid lysophopholipids to release free bioactive eicosanoids. Hydrolyzes the ester bond of the fatty acyl group attached at sn-1 position of phospholipids (phospholipase A1 activity) only if an ether linkage rather than an ester linkage is present at the sn-2 position. This hydrolysis is not stereospecific. Has calcium-independent phospholipase A2 and lysophospholipase activities in the presence of phosphoinositides. Has O-acyltransferase activity. Catalyzes the transfer of fatty acyl chains from phospholipids to a primary hydroxyl group of glycerol (sn-1 or sn-3), potentially contributing to monoacylglycerol synthesis. This is Cytosolic phospholipase A2 (Pla2g4a) from Mus musculus (Mouse).